We begin with the raw amino-acid sequence, 554 residues long: Carboxylesterase 1C (554 aa).

The first 18 residues, 1-18 (MWLHALVWASLAVCPILG), serve as a signal peptide directing secretion. N-linked (GlcNAc...) asparagine glycosylation occurs at asparagine 79. Residues cysteine 87 and cysteine 116 are joined by a disulfide bond. Residue serine 221 is the Acyl-ester intermediate of the active site. A disulfide bridge connects residues cysteine 273 and cysteine 284. N-linked (GlcNAc...) asparagine glycans are attached at residues asparagine 274 and asparagine 304. The active-site Charge relay system is glutamate 342. Residue asparagine 377 is glycosylated (N-linked (GlcNAc...) asparagine). Histidine 455 acts as the Charge relay system in catalysis. At serine 473 the chain carries Phosphoserine. N-linked (GlcNAc...) asparagine glycosylation occurs at asparagine 478. The Prevents secretion from ER signature appears at 551–554 (TEHK).

This sequence belongs to the type-B carboxylesterase/lipase family. As to expression, expressed in lung, kidney and liver.

It localises to the endoplasmic reticulum lumen. The enzyme catalyses a carboxylic ester + H2O = an alcohol + a carboxylate + H(+). Functionally, involved in the detoxification of xenobiotics and in the activation of ester and amide prodrugs. Involved in the extracellular metabolism of lung surfactant. This chain is Carboxylesterase 1C (Ces1c), found in Mus musculus (Mouse).